The sequence spans 347 residues: 5-formaminoimidazole-4-carboxamide-1-(beta)-D-ribofuranosyl 5'-monophosphate synthetase (347 aa).

The 5-amino-1-(5-phospho-beta-D-ribosyl)imidazole-4-carboxamide site is built by histidine 23 and serine 91. In terms of domain architecture, ATP-grasp spans 112 to 323 (RKILLWESDQ…YSYLYWDEPM (212 aa)). ATP is bound by residues 142–196 (PDEV…VPAY) and glutamate 218. A 5-amino-1-(5-phospho-beta-D-ribosyl)imidazole-4-carboxamide-binding site is contributed by asparagine 244. The Mg(2+) site is built by glutamate 283 and glutamate 296.

This sequence belongs to the phosphohexose mutase family. Requires Mg(2+) as cofactor. Mn(2+) serves as cofactor.

The catalysed reaction is 5-amino-1-(5-phospho-beta-D-ribosyl)imidazole-4-carboxamide + formate + ATP = 5-formamido-1-(5-phospho-D-ribosyl)imidazole-4-carboxamide + ADP + phosphate. It participates in purine metabolism; IMP biosynthesis via de novo pathway; 5-formamido-1-(5-phospho-D-ribosyl)imidazole-4-carboxamide from 5-amino-1-(5-phospho-D-ribosyl)imidazole-4-carboxamide (formate route): step 1/1. In terms of biological role, catalyzes the ATP- and formate-dependent formylation of 5-aminoimidazole-4-carboxamide-1-beta-d-ribofuranosyl 5'-monophosphate (AICAR) to 5-formaminoimidazole-4-carboxamide-1-beta-d-ribofuranosyl 5'-monophosphate (FAICAR) in the absence of folates. The protein is 5-formaminoimidazole-4-carboxamide-1-(beta)-D-ribofuranosyl 5'-monophosphate synthetase of Ignicoccus hospitalis (strain KIN4/I / DSM 18386 / JCM 14125).